We begin with the raw amino-acid sequence, 80 residues long: Cytochrome c oxidase subunit 7A1, mitochondrial (80 aa).

Residues 1–21 constitute a mitochondrion transit peptide; the sequence is MRALRVSQALVRSFSSTARNR. Residues 22–46 lie on the Mitochondrial matrix side of the membrane; the sequence is FENRVAEKQKLFQEDNGLPVHLKGG. Residues 47 to 75 form a helical membrane-spanning segment; that stretch reads ATDNILYRVTMTLCLGGTLYSLYCLGWAS. Residues 76-80 lie on the Mitochondrial intermembrane side of the membrane; the sequence is FPHKK.

The protein belongs to the cytochrome c oxidase VIIa family. As to quaternary structure, component of the complex IV (CIV, cytochrome c oxidase), a multisubunit enzyme composed of 14 subunits. The complex is composed of a catalytic core of 3 subunits MT-CO1, MT-CO2 and MT-CO3, encoded in the mitochondrial DNA, and 11 supernumerary subunits COX4I1 (or COX4I2), COX5A, COX5B, COX6A2 (or COX6A1), COX6B1 (or COX6B2), COX6C, COX7A1 (or COX7A2), COX7B, COX7C, COX8B and NDUFA4, which are encoded in the nuclear genome. The complex exists as a monomer or a dimer and forms supercomplexes (SCs) in the inner mitochondrial membrane with NADH-ubiquinone oxidoreductase (complex I, CI) and ubiquinol-cytochrome c oxidoreductase (cytochrome b-c1 complex, complex III, CIII), resulting in different assemblies (supercomplex SCI(1)III(2)IV(1) and megacomplex MCI(2)III(2)IV(2)).

The protein resides in the mitochondrion inner membrane. Its pathway is energy metabolism; oxidative phosphorylation. Component of the mitochondrial respiratory complex IV (CIV, also named cytochrome c oxidase complex), the last enzyme in the mitochondrial electron transport chain which drives oxidative phosphorylation. The CIV complex is the component of the respiratory chain that catalyzes the reduction of oxygen to water. Acts as an assembly factor that specifically drives the homodimerization of CIV complexes, mediating the formation of mitochondrial respiratory supercomplexes (respirasomes) containing two CIV: supercomplxes with two molecules of CIV show improved activity. Despite being highly expressed in brown adipose tissue, not required for thermogenesis. The sequence is that of Cytochrome c oxidase subunit 7A1, mitochondrial (COX7A1) from Bos taurus (Bovine).